Here is a 426-residue protein sequence, read N- to C-terminus: LIM/homeobox protein Lhx2 (426 aa).

Basic and acidic residues predominate over residues 14–24 (VIDEMDRRQER). The disordered stretch occupies residues 14–42 (VIDEMDRRQERGSGISSAIDRGDTETTMP). LIM zinc-binding domains lie at 52 to 104 (CAGC…CKED) and 114 to 167 (CARC…CRLH). The segment at 248-268 (DAEHLDRDQPYPSSQKTKRMR) is disordered. Positions 264 to 323 (TKRMRTSFKHHQLRTMKSYFAINHNPDAKDLKQLAQKTGLTKRVLQVWFQNARAKFRRNL) form a DNA-binding region, homeobox. The Nuclear localization signal signature appears at 305–321 (KRVLQVWFQNARAKFRR). Residues 326–354 (QENTGVDKTSDATLQTGTPSGPASELSNA) are compositionally biased toward polar residues. The disordered stretch occupies residues 326–370 (QENTGVDKTSDATLQTGTPSGPASELSNASLSPSSTPTTLTDLTS). Residues 355-370 (SLSPSSTPTTLTDLTS) are compositionally biased toward low complexity.

As to quaternary structure, interacts (via LIM domains) with CITED2. Interacts with POU4F2. In terms of tissue distribution, found in discrete regions of the developing CNS, primarily in diencephalic and telencephalic structures and a subset of lymphoid tissues. Also found in embryonic spinal cord and fetal liver.

It localises to the nucleus. Functionally, acts as a transcriptional activator. Stimulates the promoter of the alpha-glycoprotein gene. Transcriptional regulatory protein involved in the control of cell differentiation in developing lymphoid and neural cell types. This is LIM/homeobox protein Lhx2 (Lhx2) from Rattus norvegicus (Rat).